The following is a 479-amino-acid chain: Protein kinase 2 (479 aa).

Residues Met-1–Pro-136 form a disordered region. Composition is skewed to low complexity over residues Ala-52–Ala-65 and Ile-79–Ile-96. A compositionally biased stretch (polar residues) spans Asn-102 to Ala-115. The region spanning Phe-153–Phe-407 is the Protein kinase domain. ATP is bound by residues Ile-159–Val-167 and Lys-182. Asp-276 serves as the catalytic Proton acceptor. Residue Thr-309 is modified to Phosphothreonine; by autocatalysis. An AGC-kinase C-terminal domain is found at Lys-408–Asp-479. The residue at position 470 (Thr-470) is a Phosphothreonine.

Belongs to the protein kinase superfamily. AGC Ser/Thr protein kinase family. S6 kinase subfamily. Seems to be myristoylated.

The protein resides in the cytoplasm. The protein localises to the cell membrane. The enzyme catalyses L-seryl-[protein] + ATP = O-phospho-L-seryl-[protein] + ADP + H(+). The catalysed reaction is L-threonyl-[protein] + ATP = O-phospho-L-threonyl-[protein] + ADP + H(+). Its function is as follows. Required for morphogenesis during multicellular development. Phosphorylates talB, gefN, gefS, PI4P 5-kinase and gacQ. In Dictyostelium discoideum (Social amoeba), this protein is Protein kinase 2 (pkgB).